A 266-amino-acid polypeptide reads, in one-letter code: Norfluorocurarine synthase 1 (266 aa).

Positions 11 to 121 (HFVLVHGAGH…VMPDAVNPPS (111 aa)) constitute an AB hydrolase-1 domain. Catalysis depends on residues Ser86, Asp216, and His244.

It belongs to the AB hydrolase superfamily. Homodimer.

It carries out the reaction 17-dehydropreakuammicine + H2O = norfluorocurarine + methanol + CO2. The protein operates within alkaloid biosynthesis. Hydrolase involved in the biosynthesis of curare monoterpene indole alkaloids (MIAs), natural products such as diaboline, a pharmacologically active compound used to regulate blood pressure. Curare alkaloids act as animal glycine receptor antagonists. Catalyzes the conversion of dehydropreakuammicine to norfluorocurarine. The polypeptide is Norfluorocurarine synthase 1 (Strychnos sp).